We begin with the raw amino-acid sequence, 436 residues long: Adenosylmethionine-8-amino-7-oxononanoate aminotransferase (436 aa).

Substrate is bound at residue Trp66. 126–127 is a pyridoxal 5'-phosphate binding site; it reads GS. A substrate-binding site is contributed by Tyr159. Asp256 serves as a coordination point for pyridoxal 5'-phosphate. Positions 285 and 318 each coordinate substrate. At Lys285 the chain carries N6-(pyridoxal phosphate)lysine. 319–320 lines the pyridoxal 5'-phosphate pocket; the sequence is PT. Arg402 contributes to the substrate binding site.

The protein belongs to the class-III pyridoxal-phosphate-dependent aminotransferase family. BioA subfamily. As to quaternary structure, homodimer. Pyridoxal 5'-phosphate serves as cofactor.

Its subcellular location is the cytoplasm. The enzyme catalyses (8S)-8-amino-7-oxononanoate + S-adenosyl-L-methionine = S-adenosyl-4-methylsulfanyl-2-oxobutanoate + (7R,8S)-7,8-diammoniononanoate. It participates in cofactor biosynthesis; biotin biosynthesis; 7,8-diaminononanoate from 8-amino-7-oxononanoate (SAM route): step 1/1. Its function is as follows. Catalyzes the transfer of the alpha-amino group from S-adenosyl-L-methionine (SAM) to 7-keto-8-aminopelargonic acid (KAPA) to form 7,8-diaminopelargonic acid (DAPA). It is the only aminotransferase known to utilize SAM as an amino donor. The polypeptide is Adenosylmethionine-8-amino-7-oxononanoate aminotransferase (Mycobacterium leprae (strain TN)).